The following is a 55-amino-acid chain: Major pollen allergen Dac g 4 (55 aa).

This Dactylis glomerata (Orchard grass) protein is Major pollen allergen Dac g 4.